Reading from the N-terminus, the 383-residue chain is NIPA-like protein 2 (383 aa).

N-linked (GlcNAc...) asparagine glycans are attached at residues N23 and N33. The next 7 helical transmembrane spans lie at 46–66 (IHLF…ISLN), 88–108 (VLWW…FAAY), 110–130 (FAPI…SAII), 144–164 (LLGT…APNI), 177–197 (LVGW…CILL), 209–229 (VILL…VKAV), and 243–263 (LTYP…VFQV). A glycan (N-linked (GlcNAc...) asparagine) is linked at N274. Helical transmembrane passes span 278–298 (VVPV…IIFY) and 306–326 (FLTV…VFLV). A disordered region spans residues 355–383 (QPDSHSLSYGTLPDGSDSTKSQSGEKKEV).

This sequence belongs to the NIPA family.

Its subcellular location is the membrane. This chain is NIPA-like protein 2 (NIPAL2), found in Homo sapiens (Human).